A 103-amino-acid polypeptide reads, in one-letter code: Cell division protein FtsB (103 aa).

The Cytoplasmic portion of the chain corresponds to 1–3; it reads MGK. A helical membrane pass occupies residues 4–21; that stretch reads LTLLLLAILVWLQYSLWF. The Periplasmic segment spans residues 22 to 103; that stretch reads GKNGIHDYTR…RAQSAGQNNR (82 aa). A coiled-coil region spans residues 28–71; sequence DYTRVNDDVAALQATNAKLKARNDQLFAEIDDLNGGQEALEERA.

It belongs to the FtsB family. Part of a complex composed of FtsB, FtsL and FtsQ.

It is found in the cell inner membrane. Essential cell division protein. May link together the upstream cell division proteins, which are predominantly cytoplasmic, with the downstream cell division proteins, which are predominantly periplasmic. The chain is Cell division protein FtsB from Shigella flexneri serotype 5b (strain 8401).